A 79-amino-acid chain; its full sequence is Orally active insecticidal peptide (79 aa).

The N-terminal stretch at 1–19 (MRVLFIIAGLALLSVVCYT) is a signal peptide. Positions 20–44 (SEMKERSSFNEVLSEFFAADEPQER) are excised as a propeptide. Intrachain disulfides connect cysteine 46–cysteine 61, cysteine 53–cysteine 66, and cysteine 60–cysteine 73. Position 77 is an alanine amide (alanine 77).

This sequence belongs to the neurotoxin 03 (Tx2) family. 01 subfamily. As to expression, expressed by the venom gland.

It is found in the secreted. Probable ion channel inhibitor. Shows insecticidal activity when injected into mealworms. This Selenotypus plumipes (Australian featherleg tarantula) protein is Orally active insecticidal peptide.